We begin with the raw amino-acid sequence, 438 residues long: uncharacterized protein (438 aa).

Disordered stretches follow at residues 1–22 and 156–264; these read MRDN…TYDP and DTAK…PWRP. The span at 156-170 shows a compositional bias: basic and acidic residues; it reads DTAKSNEKLQGDESK. Over residues 171 to 189 the composition is skewed to low complexity; the sequence is SSNGSSSTSTTTQRGSTNS. Over residues 191–206 the composition is skewed to basic and acidic residues; the sequence is TKVKALKIEVKKKSDS.

It belongs to the adhesin P1 family.

This is an uncharacterized protein from Mycoplasma pneumoniae (strain ATCC 29342 / M129 / Subtype 1) (Mycoplasmoides pneumoniae).